The primary structure comprises 662 residues: Phosphomethylpyrimidine synthase (662 aa).

Residues Asn-235, Met-264, Tyr-293, His-329, 349–351 (SRG), 390–393 (DGMR), and Glu-429 each bind substrate. His-433 contacts Zn(2+). Tyr-456 contacts substrate. Residue His-497 participates in Zn(2+) binding. The [4Fe-4S] cluster site is built by Cys-577, Cys-580, and Cys-585.

Belongs to the ThiC family. In terms of assembly, homodimer. The cofactor is [4Fe-4S] cluster.

The enzyme catalyses 5-amino-1-(5-phospho-beta-D-ribosyl)imidazole + S-adenosyl-L-methionine = 4-amino-2-methyl-5-(phosphooxymethyl)pyrimidine + CO + 5'-deoxyadenosine + formate + L-methionine + 3 H(+). It functions in the pathway cofactor biosynthesis; thiamine diphosphate biosynthesis. In terms of biological role, catalyzes the synthesis of the hydroxymethylpyrimidine phosphate (HMP-P) moiety of thiamine from aminoimidazole ribotide (AIR) in a radical S-adenosyl-L-methionine (SAM)-dependent reaction. In Shewanella halifaxensis (strain HAW-EB4), this protein is Phosphomethylpyrimidine synthase.